We begin with the raw amino-acid sequence, 397 residues long: uncharacterized protein (397 aa).

The protein belongs to the ROK (NagC/XylR) family.

This is an uncharacterized protein from Escherichia coli (strain K12).